The primary structure comprises 300 residues: Bifunctional protein FolD (300 aa).

NADP(+) is bound by residues 169–171 (GRG), Ser-196, and Ile-237.

The protein belongs to the tetrahydrofolate dehydrogenase/cyclohydrolase family. In terms of assembly, homodimer.

It carries out the reaction (6R)-5,10-methylene-5,6,7,8-tetrahydrofolate + NADP(+) = (6R)-5,10-methenyltetrahydrofolate + NADPH. The enzyme catalyses (6R)-5,10-methenyltetrahydrofolate + H2O = (6R)-10-formyltetrahydrofolate + H(+). The protein operates within one-carbon metabolism; tetrahydrofolate interconversion. Its function is as follows. Catalyzes the oxidation of 5,10-methylenetetrahydrofolate to 5,10-methenyltetrahydrofolate and then the hydrolysis of 5,10-methenyltetrahydrofolate to 10-formyltetrahydrofolate. In Clavibacter sepedonicus (Clavibacter michiganensis subsp. sepedonicus), this protein is Bifunctional protein FolD.